A 237-amino-acid chain; its full sequence is uncharacterized protein (237 aa).

In terms of domain architecture, N-acetyltransferase spans 119 to 237 (VTVRRLTPTD…PAGLDGGLPA (119 aa)).

This is an uncharacterized protein from Streptomyces virginiae (Streptomyces cinnamonensis).